Reading from the N-terminus, the 68-residue chain is Probable tautomerase HP_0924 (68 aa).

The active-site Proton acceptor; via imino nitrogen is proline 2.

The protein belongs to the 4-oxalocrotonate tautomerase family.

The protein is Probable tautomerase HP_0924 of Helicobacter pylori (strain ATCC 700392 / 26695) (Campylobacter pylori).